A 134-amino-acid chain; its full sequence is Histone H2A (134 aa).

The segment covering 1 to 11 (MTGGGKSGGKA) has biased composition (gly residues). The disordered stretch occupies residues 1–24 (MTGGGKSGGKASGSKNAQSRSSKA). N6-acetyllysine is present on residues K6 and K10. Q107 is modified (N5-methylglutamine).

Belongs to the histone H2A family. In terms of assembly, the nucleosome is a histone octamer containing two molecules each of H2A, H2B, H3 and H4 assembled in one H3-H4 heterotetramer and two H2A-H2B heterodimers. The octamer wraps approximately 147 bp of DNA. Post-translationally, acetylated by ESA1 to form H2AK4ac and H2AK7ac.

Its subcellular location is the nucleus. The protein localises to the chromosome. Functionally, core component of nucleosome. Nucleosomes wrap and compact DNA into chromatin, limiting DNA accessibility to the cellular machineries which require DNA as a template. Histones thereby play a central role in transcription regulation, DNA repair, DNA replication and chromosomal stability. DNA accessibility is regulated via a complex set of post-translational modifications of histones, also called histone code, and nucleosome remodeling. The polypeptide is Histone H2A (HTA1) (Gibberella zeae (strain ATCC MYA-4620 / CBS 123657 / FGSC 9075 / NRRL 31084 / PH-1) (Wheat head blight fungus)).